Reading from the N-terminus, the 209-residue chain is Uracil phosphoribosyltransferase (209 aa).

5-phospho-alpha-D-ribose 1-diphosphate contacts are provided by residues arginine 79, arginine 104, and 131-139 (DPMLATGNS). Residues isoleucine 194 and 199–201 (GDA) each bind uracil. Aspartate 200 is a binding site for 5-phospho-alpha-D-ribose 1-diphosphate.

Belongs to the UPRTase family. Mg(2+) serves as cofactor.

It catalyses the reaction UMP + diphosphate = 5-phospho-alpha-D-ribose 1-diphosphate + uracil. The protein operates within pyrimidine metabolism; UMP biosynthesis via salvage pathway; UMP from uracil: step 1/1. Allosterically activated by GTP. In terms of biological role, catalyzes the conversion of uracil and 5-phospho-alpha-D-ribose 1-diphosphate (PRPP) to UMP and diphosphate. The protein is Uracil phosphoribosyltransferase of Sinorhizobium medicae (strain WSM419) (Ensifer medicae).